Consider the following 61-residue polypeptide: Large ribosomal subunit protein bL28 (61 aa).

The tract at residues methionine 1–arginine 26 is disordered. The segment covering lysine 9–arginine 25 has biased composition (polar residues).

This sequence belongs to the bacterial ribosomal protein bL28 family.

This chain is Large ribosomal subunit protein bL28, found in Limosilactobacillus reuteri (strain DSM 20016) (Lactobacillus reuteri).